A 924-amino-acid polypeptide reads, in one-letter code: Probable dipeptidyl-aminopeptidase B (924 aa).

Residues 1 to 104 (MPPFTYSDDT…DQRSPGDGQR (104 aa)) form a disordered region. Over 1–111 (MPPFTYSDDT…GQRMDRSLRR (111 aa)) the chain is Cytoplasmic. The span at 9–23 (DTLRSGRDRFRDHSP) shows a compositional bias: basic and acidic residues. Polar residues predominate over residues 31-43 (SQETDSSASTTSI). Composition is skewed to basic and acidic residues over residues 47–58 (RIQERLDTKEFT) and 92–104 (SRSD…DGQR). The chain crosses the membrane as a helical; Signal-anchor for type II membrane protein span at residues 112–132 (WLFIVSGVLVATWVIGLFVFV). Topologically, residues 133–924 (SSKAYKPSSS…GMKKRAAPTA (792 aa)) are vacuolar. N-linked (GlcNAc...) asparagine glycans are attached at residues Asn-231 and Asn-364. Catalysis depends on Ser-768, which acts as the Charge relay system. Asn-827 is a glycosylation site (N-linked (GlcNAc...) asparagine). Active-site charge relay system residues include Asp-845 and His-878.

It belongs to the peptidase S9B family.

The protein resides in the vacuole membrane. The enzyme catalyses Release of an N-terminal dipeptide, Xaa-Yaa-|-Zaa-, from a polypeptide, preferentially when Yaa is Pro, provided Zaa is neither Pro nor hydroxyproline.. Type IV dipeptidyl-peptidase which removes N-terminal dipeptides sequentially from polypeptides having unsubstituted N-termini provided that the penultimate residue is proline. The protein is Probable dipeptidyl-aminopeptidase B (DAPB) of Sordaria macrospora (strain ATCC MYA-333 / DSM 997 / K(L3346) / K-hell).